The following is a 209-amino-acid chain: Pyridoxine/pyridoxamine 5'-phosphate oxidase (209 aa).

Residues 7–10 and lysine 64 contribute to the substrate site; that span reads REDY. Residues 59-64, 74-75, arginine 80, and lysine 81 each bind FMN; these read RIVLLK and FT. 3 residues coordinate substrate: tyrosine 121, arginine 125, and serine 129. Residues 138–139 and tryptophan 182 each bind FMN; that span reads QS. Substrate is bound at residue 188–190; it reads RLH. An FMN-binding site is contributed by arginine 192.

The protein belongs to the pyridoxamine 5'-phosphate oxidase family. In terms of assembly, homodimer. FMN serves as cofactor.

The enzyme catalyses pyridoxamine 5'-phosphate + O2 + H2O = pyridoxal 5'-phosphate + H2O2 + NH4(+). It carries out the reaction pyridoxine 5'-phosphate + O2 = pyridoxal 5'-phosphate + H2O2. It functions in the pathway cofactor metabolism; pyridoxal 5'-phosphate salvage; pyridoxal 5'-phosphate from pyridoxamine 5'-phosphate: step 1/1. It participates in cofactor metabolism; pyridoxal 5'-phosphate salvage; pyridoxal 5'-phosphate from pyridoxine 5'-phosphate: step 1/1. Functionally, catalyzes the oxidation of either pyridoxine 5'-phosphate (PNP) or pyridoxamine 5'-phosphate (PMP) into pyridoxal 5'-phosphate (PLP). This is Pyridoxine/pyridoxamine 5'-phosphate oxidase from Actinobacillus pleuropneumoniae serotype 5b (strain L20).